Consider the following 607-residue polypeptide: MFAARFDPSRHYEEGDTAPPAPSLPMKRSRDAQQDESESEMSSAESEDEAMQLDDEEEVVDSKGKENHGSDSIGTGEADKRHQSVLSRFQRTISVQDKLDSDAIVGSDSEEEPAKMHGLVPIAQPAIVRDTLAQDSRKERKLLAWSNTTKIHYDSTMTKPFAAYKDILSTSLLANVEGGFSRTAFPIQTALLDSVLPLMSQAYSVSKRYYTRKVGDILVNASTGSGKTLAYAMLLIHILSRRTVNKLRAVILVPTKLLVHQVYDTVQALAKGSSVVVAVSKMDTSLKEESAKLKAQEPDVLIITPGRLVDHLNMQTFSLKNLKFLVLDEADRLLNQSFQNWCIELMTRLNAERPFKGPGNVIKMIFSATLTTNTERLHDLQLHNPKLFLMGSQLYHMPAQLQEYNLPIPTSKSYAKPLILLRLLPLLSTESLRILVFVKSNEASIRLAALLTAMVGNGLSAVSTTVGSINNNNSKATNRKLIEAFAAGASGHCSILVSTDLMSRGLDISGISHVINYDLPISSQQYVHRCGRTARANTSGTAVNLLVGKGEQNFWKDHIDSDISRAPDGSHLFFDEEQREQLVSLSEEDTATYKKCLEELKKSVLGR.

The segment at 1-83 (MFAARFDPSR…GTGEADKRHQ (83 aa)) is disordered. The segment covering 34-59 (QDESESEMSSAESEDEAMQLDDEEEV) has biased composition (acidic residues). The segment covering 60 to 69 (VDSKGKENHG) has biased composition (basic and acidic residues). The short motif at 184 to 192 (AFPIQTALL) is the Q motif element. Residues 208 to 388 (RYYTRKVGDI…DLQLHNPKLF (181 aa)) form the Helicase ATP-binding domain. ATP is bound at residue 221-228 (ASTGSGKT). The short motif at 328-331 (DEAD) is the DEAD box element. A Helicase C-terminal domain is found at 419-578 (ILLRLLPLLS…GSHLFFDEEQ (160 aa)).

It belongs to the DEAD box helicase family. DDX51/DBP6 subfamily. As to quaternary structure, associated with pre-ribosomal particles.

Its subcellular location is the nucleus. It localises to the nucleolus. It carries out the reaction ATP + H2O = ADP + phosphate + H(+). ATP-binding RNA helicase involved in the biogenesis of 60S ribosomal subunits and is required for the normal formation of 25S and 5.8S rRNAs. The polypeptide is ATP-dependent RNA helicase DBP6 (DBP6) (Eremothecium gossypii (strain ATCC 10895 / CBS 109.51 / FGSC 9923 / NRRL Y-1056) (Yeast)).